The sequence spans 602 residues: Spermidine-citrate ligase (602 aa).

ATP-binding positions include 286–288, lysine 300, and arginine 312; that span reads SLR.

The protein belongs to the IucA/IucC family.

The enzyme catalyses spermidine + citrate + ATP = N(8)-citryl-spermidine + AMP + diphosphate + H(+). It functions in the pathway siderophore biosynthesis; petrobactin biosynthesis. Involved in the biosynthesis of petrobactin, a catecholate siderophore that functions in both iron acquisition and virulence. Catalyzes the ATP-dependent condensation of citric acid and spermidine to form N(8)-citryl-spermidine. It can also catalyze the condensation of several di- and triamine analogs of spermidine with citric acid and the condensation of the citric acid analog tricarballylic acid with spermidine. Required for growth in iron-depleted medium and for full virulence in a mouse model of infection. The chain is Spermidine-citrate ligase from Bacillus anthracis.